The chain runs to 347 residues: Two pore potassium channel a (347 aa).

Positions methionine 1–leucine 11 are enriched in polar residues. The interval methionine 1–serine 49 is disordered. Topologically, residues methionine 1–arginine 65 are cytoplasmic. Residues leucine 66–methionine 86 traverse the membrane as a helical segment. The pore-forming intramembrane region spans aspartate 99 to proline 118. The helical transmembrane segment at leucine 125 to valine 145 threads the bilayer. Over alanine 146–tyrosine 183 the chain is Cytoplasmic. Residues lysine 184–tryptophan 204 traverse the membrane as a helical segment. An intramembrane region (pore-forming) is located at residues aspartate 213–phenylalanine 232. Residues valine 239 to leucine 259 form a helical membrane-spanning segment. The Cytoplasmic portion of the chain corresponds to alanine 260–glutamine 347. EF-hand domains lie at leucine 276 to lysine 311 and glutamate 315 to glutamine 347. Ca(2+)-binding residues include aspartate 289, aspartate 291, aspartate 293, glutamine 295, glutamate 300, aspartate 328, aspartate 330, serine 332, threonine 334, and aspartate 339.

This sequence belongs to the two pore domain potassium channel (TC 1.A.1.7) family. As to quaternary structure, homodimer.

The protein localises to the vacuole membrane. In terms of biological role, highly selective inward-rectifying potassium channel that is specifically located in the tonoplast of large vacuoles. Functions independently of the voltage difference across the membrane. This chain is Two pore potassium channel a (TPKA), found in Oryza sativa subsp. japonica (Rice).